The following is a 194-amino-acid chain: Protein GrpE (194 aa).

It belongs to the GrpE family. Homodimer.

The protein resides in the cytoplasm. Functionally, participates actively in the response to hyperosmotic and heat shock by preventing the aggregation of stress-denatured proteins, in association with DnaK and GrpE. It is the nucleotide exchange factor for DnaK and may function as a thermosensor. Unfolded proteins bind initially to DnaJ; upon interaction with the DnaJ-bound protein, DnaK hydrolyzes its bound ATP, resulting in the formation of a stable complex. GrpE releases ADP from DnaK; ATP binding to DnaK triggers the release of the substrate protein, thus completing the reaction cycle. Several rounds of ATP-dependent interactions between DnaJ, DnaK and GrpE are required for fully efficient folding. This is Protein GrpE from Aliivibrio fischeri (strain MJ11) (Vibrio fischeri).